Here is a 131-residue protein sequence, read N- to C-terminus: D-ribose pyranase (131 aa).

The active-site Proton donor is the H20. Substrate is bound by residues D28, H98, and 120–122 (YAN).

It belongs to the RbsD / FucU family. RbsD subfamily. In terms of assembly, homodecamer.

It is found in the cytoplasm. The enzyme catalyses beta-D-ribopyranose = beta-D-ribofuranose. It functions in the pathway carbohydrate metabolism; D-ribose degradation; D-ribose 5-phosphate from beta-D-ribopyranose: step 1/2. In terms of biological role, catalyzes the interconversion of beta-pyran and beta-furan forms of D-ribose. In Chloroflexus aggregans (strain MD-66 / DSM 9485), this protein is D-ribose pyranase.